The chain runs to 322 residues: Phosphatidylserine decarboxylase proenzyme (322 aa).

Catalysis depends on charge relay system; for autoendoproteolytic cleavage activity residues Asp90, His147, and Ser254. Residue Ser254 is the Schiff-base intermediate with substrate; via pyruvic acid; for decarboxylase activity of the active site. Ser254 bears the Pyruvic acid (Ser); by autocatalysis mark. A disordered region spans residues Glu294–Ser322. Positions Asn306–Ser322 are enriched in basic and acidic residues.

Belongs to the phosphatidylserine decarboxylase family. PSD-B subfamily. Prokaryotic type I sub-subfamily. As to quaternary structure, heterodimer of a large membrane-associated beta subunit and a small pyruvoyl-containing alpha subunit. It depends on pyruvate as a cofactor. Post-translationally, is synthesized initially as an inactive proenzyme. Formation of the active enzyme involves a self-maturation process in which the active site pyruvoyl group is generated from an internal serine residue via an autocatalytic post-translational modification. Two non-identical subunits are generated from the proenzyme in this reaction, and the pyruvate is formed at the N-terminus of the alpha chain, which is derived from the carboxyl end of the proenzyme. The autoendoproteolytic cleavage occurs by a canonical serine protease mechanism, in which the side chain hydroxyl group of the serine supplies its oxygen atom to form the C-terminus of the beta chain, while the remainder of the serine residue undergoes an oxidative deamination to produce ammonia and the pyruvoyl prosthetic group on the alpha chain. During this reaction, the Ser that is part of the protease active site of the proenzyme becomes the pyruvoyl prosthetic group, which constitutes an essential element of the active site of the mature decarboxylase.

The protein localises to the cell membrane. It carries out the reaction a 1,2-diacyl-sn-glycero-3-phospho-L-serine + H(+) = a 1,2-diacyl-sn-glycero-3-phosphoethanolamine + CO2. Its pathway is phospholipid metabolism; phosphatidylethanolamine biosynthesis; phosphatidylethanolamine from CDP-diacylglycerol: step 2/2. Its function is as follows. Catalyzes the formation of phosphatidylethanolamine (PtdEtn) from phosphatidylserine (PtdSer). In Citrobacter koseri (strain ATCC BAA-895 / CDC 4225-83 / SGSC4696), this protein is Phosphatidylserine decarboxylase proenzyme.